The primary structure comprises 417 residues: NADH-quinone oxidoreductase subunit D 1 (417 aa).

This sequence belongs to the complex I 49 kDa subunit family. NDH-1 is composed of 14 different subunits. Subunits NuoB, C, D, E, F, and G constitute the peripheral sector of the complex.

It is found in the cell membrane. The catalysed reaction is a quinone + NADH + 5 H(+)(in) = a quinol + NAD(+) + 4 H(+)(out). Its function is as follows. NDH-1 shuttles electrons from NADH, via FMN and iron-sulfur (Fe-S) centers, to quinones in the respiratory chain. The immediate electron acceptor for the enzyme in this species is believed to be ubiquinone. Couples the redox reaction to proton translocation (for every two electrons transferred, four hydrogen ions are translocated across the cytoplasmic membrane), and thus conserves the redox energy in a proton gradient. This is NADH-quinone oxidoreductase subunit D 1 from Roseiflexus castenholzii (strain DSM 13941 / HLO8).